Reading from the N-terminus, the 199-residue chain is MTDGGMTKDAIGAGALAGEGLRAFFERDAITVARDLLGCHLTVDGAGGRITETEAYFPDDEASHSFRGPTKRNGAMFGRPGNVYIYRIYGMYWCLNFVCHPGSAVLIRALEPETGIAAMMERRGTDMLTALCSGPGKLCQALGIDIEINDRLLDLPPYALTPSTPVPIVAGKRIGITRNAEAPWRFGIQGSRYLSKPFR.

The protein belongs to the DNA glycosylase MPG family.

In Rhizobium etli (strain ATCC 51251 / DSM 11541 / JCM 21823 / NBRC 15573 / CFN 42), this protein is Putative 3-methyladenine DNA glycosylase.